The chain runs to 20 residues: Beta-fibrinogenase jerdofibrase (20 aa).

A Peptidase S1 domain is found at 1–20 (VIGGDECNINEHPFLVLVYY).

This sequence belongs to the peptidase S1 family. Snake venom subfamily. Monomer. As to expression, expressed by the venom gland.

The protein resides in the secreted. With respect to regulation, inhibited by PMSF and soybean trypsin inhibitor. Partially inhibited by DTT and cysteine. Not affected by EDTA. In terms of biological role, fibrin(ogen)olytic serine protease degrades Bbeta-chain of human fibrinogen (FGB) and shows a lower activity on Aa-chain (FGA). Also degrades fibrin directly. Releases fibrinopeptide B and a small amount of fibrinopeptide A. Has also be shown to catalyze the hydrolysis of some chromogenic substrates such as S2238, S2160, S2302 and S2251. The polypeptide is Beta-fibrinogenase jerdofibrase (Protobothrops jerdonii (Jerdon's pitviper)).